Consider the following 491-residue polypeptide: Acetyl-coenzyme A carboxylase carboxyl transferase subunit beta, chloroplastic (491 aa).

The tract at residues Leu-28 to Asp-56 is disordered. In terms of domain architecture, CoA carboxyltransferase N-terminal spans Leu-223–His-491. Residues Cys-227, Cys-230, Cys-246, and Cys-249 each contribute to the Zn(2+) site. A C4-type zinc finger spans residues Cys-227 to Cys-249.

This sequence belongs to the AccD/PCCB family. Acetyl-CoA carboxylase is a heterohexamer composed of biotin carboxyl carrier protein, biotin carboxylase and 2 subunits each of ACCase subunit alpha and ACCase plastid-coded subunit beta (accD). The cofactor is Zn(2+).

Its subcellular location is the plastid. It is found in the chloroplast stroma. The enzyme catalyses N(6)-carboxybiotinyl-L-lysyl-[protein] + acetyl-CoA = N(6)-biotinyl-L-lysyl-[protein] + malonyl-CoA. It functions in the pathway lipid metabolism; malonyl-CoA biosynthesis; malonyl-CoA from acetyl-CoA: step 1/1. Its function is as follows. Component of the acetyl coenzyme A carboxylase (ACC) complex. Biotin carboxylase (BC) catalyzes the carboxylation of biotin on its carrier protein (BCCP) and then the CO(2) group is transferred by the transcarboxylase to acetyl-CoA to form malonyl-CoA. The protein is Acetyl-coenzyme A carboxylase carboxyl transferase subunit beta, chloroplastic of Daucus carota (Wild carrot).